The chain runs to 197 residues: MAKVLILKSSILGSYSQSSALVDYLNQQWSSKGAQIKVRDLGENTLPMLDGELASGLRGGDNLSERQLSALALSDELVAEIKAHDTIIIAAPMYNFGIPTTLKNWIDLIARAGVTFTYTDTGAVGLIEGKRAIIVTTRGGAHKGGPTDHVVPYLTTVLGFIGINNVETIYAEALNMGPDAAETGISQAKLAIDAITL.

FMN contacts are provided by residues Ser10, 16 to 18, 93 to 96, and 137 to 140; these read SQS, MYNF, and TRGG.

This sequence belongs to the azoreductase type 1 family. As to quaternary structure, homodimer. The cofactor is FMN.

It carries out the reaction 2 a quinone + NADH + H(+) = 2 a 1,4-benzosemiquinone + NAD(+). It catalyses the reaction N,N-dimethyl-1,4-phenylenediamine + anthranilate + 2 NAD(+) = 2-(4-dimethylaminophenyl)diazenylbenzoate + 2 NADH + 2 H(+). Functionally, quinone reductase that provides resistance to thiol-specific stress caused by electrophilic quinones. In terms of biological role, also exhibits azoreductase activity. Catalyzes the reductive cleavage of the azo bond in aromatic azo compounds to the corresponding amines. This is FMN-dependent NADH:quinone oxidoreductase from Shewanella frigidimarina (strain NCIMB 400).